We begin with the raw amino-acid sequence, 549 residues long: Cation/acetate symporter ActP (549 aa).

Transmembrane regions (helical) follow at residues 33–53, 77–97, 103–123, 148–168, 183–203, 206–226, 262–282, 303–323, 355–375, 404–424, 428–448, 464–484, and 493–513; these read WQAI…TYWA, LAIA…ALVF, GLIY…LIAE, ILSA…QMVG, IAVV…GMLA, WVQI…AFMV, ISAL…PHIL, GFMG…IMLV, LFLG…VAGL, VSKI…VLFE, IAFM…PIIL, GGWL…TIWV, and IFPY…GIWF.

This sequence belongs to the sodium:solute symporter (SSF) (TC 2.A.21) family.

It is found in the cell inner membrane. In terms of biological role, transports acetate. The sequence is that of Cation/acetate symporter ActP from Salmonella arizonae (strain ATCC BAA-731 / CDC346-86 / RSK2980).